The primary structure comprises 251 residues: 3-deoxy-manno-octulosonate cytidylyltransferase (251 aa).

Belongs to the KdsB family.

Its subcellular location is the cytoplasm. The enzyme catalyses 3-deoxy-alpha-D-manno-oct-2-ulosonate + CTP = CMP-3-deoxy-beta-D-manno-octulosonate + diphosphate. The protein operates within nucleotide-sugar biosynthesis; CMP-3-deoxy-D-manno-octulosonate biosynthesis; CMP-3-deoxy-D-manno-octulosonate from 3-deoxy-D-manno-octulosonate and CTP: step 1/1. Its pathway is bacterial outer membrane biogenesis; lipopolysaccharide biosynthesis. In terms of biological role, activates KDO (a required 8-carbon sugar) for incorporation into bacterial lipopolysaccharide in Gram-negative bacteria. The sequence is that of 3-deoxy-manno-octulosonate cytidylyltransferase from Sodalis glossinidius (strain morsitans).